The primary structure comprises 131 residues: MTDPIADYLTRLRNAINAKHRVVEVPASNLKKEITKILFEKGYILNYKFVEDGPQGTIKVALKYDSVNKVNAIKKLERISSPGMRQYTGYKDMPRVINGLGIAIISTSKGVMTNKEAAELKIGGEVLCYVY.

Belongs to the universal ribosomal protein uS8 family. As to quaternary structure, part of the 30S ribosomal subunit. Contacts proteins S5 and S12.

One of the primary rRNA binding proteins, it binds directly to 16S rRNA central domain where it helps coordinate assembly of the platform of the 30S subunit. The chain is Small ribosomal subunit protein uS8 from Bacteroides fragilis (strain ATCC 25285 / DSM 2151 / CCUG 4856 / JCM 11019 / LMG 10263 / NCTC 9343 / Onslow / VPI 2553 / EN-2).